Consider the following 72-residue polypeptide: Translation initiation factor IF-1 (72 aa).

Residues 1 to 72 (MAKEDCIEMQ…SKARIIFRAR (72 aa)) enclose the S1-like domain.

This sequence belongs to the IF-1 family. As to quaternary structure, component of the 30S ribosomal translation pre-initiation complex which assembles on the 30S ribosome in the order IF-2 and IF-3, IF-1 and N-formylmethionyl-tRNA(fMet); mRNA recruitment can occur at any time during PIC assembly.

It localises to the cytoplasm. Its function is as follows. One of the essential components for the initiation of protein synthesis. Stabilizes the binding of IF-2 and IF-3 on the 30S subunit to which N-formylmethionyl-tRNA(fMet) subsequently binds. Helps modulate mRNA selection, yielding the 30S pre-initiation complex (PIC). Upon addition of the 50S ribosomal subunit IF-1, IF-2 and IF-3 are released leaving the mature 70S translation initiation complex. The protein is Translation initiation factor IF-1 of Haemophilus ducreyi (strain 35000HP / ATCC 700724).